A 265-amino-acid polypeptide reads, in one-letter code: MAERSAPVGVMDSGVGGLSVLAEIQRLLPNETLLYVADCGHIPYGEKSPDYIRERCRHIAEFFHEQGAKAMVLACNTATVAAVADLRELYPTWPLVGMEPAVKPAAAATRSGVVGVLATTGTLQSAKFAALLDRFANDVQVITQPCPGLVELIETGDLASPALRQMLQGYVQPLLAAGCDTLILGCTHYPFLRPLLAGMVPNDVAIIDTGAAVARQLRRLLGANDLLAKGPAGAARFWTSADPEALRKILPVLWHKSDDVQSFAL.

Substrate-binding positions include 12–13 and 44–45; these read DS and YG. C75 functions as the Proton donor/acceptor in the catalytic mechanism. Residue 76-77 coordinates substrate; that stretch reads NT. C186 functions as the Proton donor/acceptor in the catalytic mechanism. 187–188 contacts substrate; the sequence is TH.

It belongs to the aspartate/glutamate racemases family.

The enzyme catalyses L-glutamate = D-glutamate. It participates in cell wall biogenesis; peptidoglycan biosynthesis. Provides the (R)-glutamate required for cell wall biosynthesis. This chain is Glutamate racemase, found in Pseudomonas putida (strain ATCC 700007 / DSM 6899 / JCM 31910 / BCRC 17059 / LMG 24140 / F1).